The sequence spans 675 residues: Electrogenic aspartate/glutamate antiporter SLC25A13, mitochondrial (675 aa).

An N-acetylalanine modification is found at Ala-2. The tract at residues Ala-2–Pro-295 is regulatory N-terminal domain. Over Ala-2–Arg-331 the chain is Mitochondrial intermembrane. EF-hand domains are found at residues Ser-51–Cys-86, Ala-87–His-122, Ile-125–Glu-157, and Ile-158–His-193. Ca(2+) contacts are provided by Asp-66, Thr-68, Asp-70, Leu-72, and Glu-77. Positions Leu-296–Gln-311 are linker loop domain. Residues Val-321–Gly-612 are carrier domain. 3 Solcar repeats span residues Ala-326–Lys-418, Val-426–Ser-510, and Val-518–Trp-606. The chain crosses the membrane as a helical span at residues Phe-332–Ile-349. The Mitochondrial matrix segment spans residues Asp-350–Arg-392. Residues Lys-353 and Lys-372 each carry the N6-acetyllysine modification. Residues Gly-393–Asn-412 form a helical membrane-spanning segment. The Mitochondrial intermembrane portion of the chain corresponds to Asp-413–Gly-435. The helical transmembrane segment at Gly-436–Leu-449 threads the bilayer. The Mitochondrial matrix segment spans residues Glu-450–Lys-484. The residue at position 453 (Lys-453) is an N6-methyllysine. An N6-acetyllysine; alternate modification is found at Lys-484. Lys-484 bears the N6-succinyllysine; alternate mark. A helical transmembrane segment spans residues Gly-485–Tyr-504. The Mitochondrial intermembrane portion of the chain corresponds to Ala-505 to Leu-523. A helical membrane pass occupies residues Leu-524 to Ala-541. Residues Asp-542–Lys-580 lie on the Mitochondrial matrix side of the membrane. Lys-580 carries the post-translational modification N6-succinyllysine. The helical transmembrane segment at Gly-581–Tyr-600 threads the bilayer. The Mitochondrial intermembrane portion of the chain corresponds to Glu-601–Pro-675. Residues Gly-613–Pro-675 are C-terminal domain. Lys-662 is modified (N6-acetyllysine). Phosphoserine is present on Ser-666.

Belongs to the mitochondrial carrier (TC 2.A.29) family. In terms of assembly, homodimer (via N-terminus). As to expression, high levels in liver and low levels in kidney, pancreas, placenta, heart and brain.

The protein resides in the mitochondrion inner membrane. The enzyme catalyses L-aspartate(in) + L-glutamate(out) + H(+)(out) = L-aspartate(out) + L-glutamate(in) + H(+)(in). The catalysed reaction is 3-sulfino-L-alanine(out) + L-glutamate(in) + H(+)(in) = 3-sulfino-L-alanine(in) + L-glutamate(out) + H(+)(out). It catalyses the reaction 3-sulfino-L-alanine(out) + L-aspartate(in) = 3-sulfino-L-alanine(in) + L-aspartate(out). With respect to regulation, activated by calcium-binding in the mitochondrial intermembrane space. Inhibited by pyridoxal 5'-phosphate, bathophenathroline, mercurials, diethyl pyrocarbonate and N-ethylmaleimide. Functionally, mitochondrial electrogenic aspartate/glutamate antiporter that favors efflux of aspartate and entry of glutamate and proton within the mitochondria as part of the malate-aspartate shuttle. Also mediates the uptake of L-cysteinesulfinate (3-sulfino-L-alanine) by mitochondria in exchange of L-glutamate and proton. Can also exchange L-cysteinesulfinate with aspartate in their anionic form without any proton translocation. Lacks transport activity towards gamma-aminobutyric acid (GABA). The polypeptide is Electrogenic aspartate/glutamate antiporter SLC25A13, mitochondrial (Homo sapiens (Human)).